Here is a 177-residue protein sequence, read N- to C-terminus: Large ribosomal subunit protein uL10 (177 aa).

Belongs to the universal ribosomal protein uL10 family. In terms of assembly, part of the ribosomal stalk of the 50S ribosomal subunit. The N-terminus interacts with L11 and the large rRNA to form the base of the stalk. The C-terminus forms an elongated spine to which L12 dimers bind in a sequential fashion forming a multimeric L10(L12)X complex.

Forms part of the ribosomal stalk, playing a central role in the interaction of the ribosome with GTP-bound translation factors. The protein is Large ribosomal subunit protein uL10 of Xanthomonas oryzae pv. oryzae (strain MAFF 311018).